The following is a 220-amino-acid chain: uncharacterized protein (220 aa).

4 helical membrane passes run 9–29 (LWITLAILTLVVMINIHGSTQ), 54–74 (YAVHGMRFFALFFWLVPFLAV), 105–125 (VQGIAFVVLICLPLLTAIHLW), and 177–197 (VLAVILTAVSVYLTLRLVIEM).

Its subcellular location is the cell membrane. This is an uncharacterized protein from Sinorhizobium fredii (strain NBRC 101917 / NGR234).